A 156-amino-acid chain; its full sequence is Small ribosomal subunit protein uS7 (156 aa).

It belongs to the universal ribosomal protein uS7 family. In terms of assembly, part of the 30S ribosomal subunit. Contacts proteins S9 and S11.

In terms of biological role, one of the primary rRNA binding proteins, it binds directly to 16S rRNA where it nucleates assembly of the head domain of the 30S subunit. Is located at the subunit interface close to the decoding center, probably blocks exit of the E-site tRNA. This is Small ribosomal subunit protein uS7 from Methylocella silvestris (strain DSM 15510 / CIP 108128 / LMG 27833 / NCIMB 13906 / BL2).